The primary structure comprises 326 residues: Aspartate carbamoyltransferase catalytic subunit (326 aa).

Residues R58 and T59 each coordinate carbamoyl phosphate. Residue K86 participates in L-aspartate binding. Residues R108, H141, and Q144 each coordinate carbamoyl phosphate. L-aspartate is bound by residues R181 and R239. Positions 280 and 281 each coordinate carbamoyl phosphate.

The protein belongs to the aspartate/ornithine carbamoyltransferase superfamily. ATCase family. Heterododecamer (2C3:3R2) of six catalytic PyrB chains organized as two trimers (C3), and six regulatory PyrI chains organized as three dimers (R2).

It catalyses the reaction carbamoyl phosphate + L-aspartate = N-carbamoyl-L-aspartate + phosphate + H(+). Its pathway is pyrimidine metabolism; UMP biosynthesis via de novo pathway; (S)-dihydroorotate from bicarbonate: step 2/3. In terms of biological role, catalyzes the condensation of carbamoyl phosphate and aspartate to form carbamoyl aspartate and inorganic phosphate, the committed step in the de novo pyrimidine nucleotide biosynthesis pathway. This is Aspartate carbamoyltransferase catalytic subunit from Synechococcus sp. (strain JA-2-3B'a(2-13)) (Cyanobacteria bacterium Yellowstone B-Prime).